Consider the following 81-residue polypeptide: Small ribosomal subunit protein bS20 (81 aa).

This sequence belongs to the bacterial ribosomal protein bS20 family.

Functionally, binds directly to 16S ribosomal RNA. This chain is Small ribosomal subunit protein bS20, found in Mycoplasma capricolum subsp. capricolum (strain California kid / ATCC 27343 / NCTC 10154).